A 122-amino-acid polypeptide reads, in one-letter code: Large ribosomal subunit protein bL12 (122 aa).

This sequence belongs to the bacterial ribosomal protein bL12 family. Homodimer. Part of the ribosomal stalk of the 50S ribosomal subunit. Forms a multimeric L10(L12)X complex, where L10 forms an elongated spine to which 2 to 4 L12 dimers bind in a sequential fashion. Binds GTP-bound translation factors.

Forms part of the ribosomal stalk which helps the ribosome interact with GTP-bound translation factors. Is thus essential for accurate translation. The sequence is that of Large ribosomal subunit protein bL12 from Actinobacillus succinogenes (strain ATCC 55618 / DSM 22257 / CCUG 43843 / 130Z).